The primary structure comprises 883 residues: Phosphoenolpyruvate carboxylase (883 aa).

Residues histidine 138 and lysine 546 contribute to the active site.

This sequence belongs to the PEPCase type 1 family. It depends on Mg(2+) as a cofactor.

The enzyme catalyses oxaloacetate + phosphate = phosphoenolpyruvate + hydrogencarbonate. Its function is as follows. Forms oxaloacetate, a four-carbon dicarboxylic acid source for the tricarboxylic acid cycle. This chain is Phosphoenolpyruvate carboxylase, found in Escherichia coli O7:K1 (strain IAI39 / ExPEC).